The sequence spans 241 residues: Ion-translocating oxidoreductase complex subunit E (241 aa).

Transmembrane regions (helical) follow at residues 22 to 42, 69 to 89, 91 to 111, 124 to 144, 157 to 177, and 182 to 202; these read LLGLCPVLAITVNAINAIGLG, IPIYIIIISSVVSSIDLVIKA, AFNLYQSLGIFIPLIITNCIV, VLVSILDGLSIGLGSTLTMFL, LFFGIEHVLGESFRFLYIEVL, and VFLLFAFPSGAFMILGIVLAG.

It belongs to the NqrDE/RnfAE family. As to quaternary structure, the complex is composed of six subunits: RnfA, RnfB, RnfC, RnfD, RnfE and RnfG.

The protein localises to the cell inner membrane. Functionally, part of a membrane-bound complex that couples electron transfer with translocation of ions across the membrane. In Buchnera aphidicola subsp. Baizongia pistaciae (strain Bp), this protein is Ion-translocating oxidoreductase complex subunit E.